We begin with the raw amino-acid sequence, 206 residues long: Transmembrane emp24 domain-containing protein bai (206 aa).

Positions 1–20 are cleaved as a signal peptide; the sequence is MLKVLYVIFTIFGYIWPIYS. Residues 21–172 are Lumenal-facing; that stretch reads VMFHLTPNTQ…RDTNEKTNSR (152 aa). The GOLD domain maps to 30 to 140; the sequence is QKCLKEDIQA…LKPLEVDLKR (111 aa). The chain crosses the membrane as a helical span at residues 173-193; it reads VLFFSIFSMCCLLGLATWQVL. Topologically, residues 194 to 206 are cytoplasmic; that stretch reads YLRRYFKAKKLIE.

It belongs to the EMP24/GP25L family.

It localises to the membrane. Eca and bai are essential, though not redundant, for dorsoventral patterning of the embryo. Specifically required during early embryogenesis for the activity of maternal tkv, while the zygotic tkv is not affected. This Drosophila virilis (Fruit fly) protein is Transmembrane emp24 domain-containing protein bai.